A 195-amino-acid chain; its full sequence is Inner membrane-spanning protein YciB (195 aa).

5 helical membrane passes run 34-54, 65-85, 88-108, 131-151, and 160-180; these read IYGATATLILASVIVYGALWL, FTLGACLVLGGLTLAFHEDTF, WKAPLVNWLFALAFAGSHFIG, LNIAWVVFFLVCGFANLYVVF, and FKVFGSLGMTLLFLIGQGLFL.

Belongs to the YciB family.

The protein localises to the cell inner membrane. Plays a role in cell envelope biogenesis, maintenance of cell envelope integrity and membrane homeostasis. The chain is Inner membrane-spanning protein YciB from Pseudomonas aeruginosa (strain LESB58).